The chain runs to 166 residues: ATP synthase subunit b (166 aa).

Residues 15 to 37 form a helical membrane-spanning segment; that stretch reads TLYYLLIFAALLLLVKHFAWGPV.

Belongs to the ATPase B chain family. F-type ATPases have 2 components, F(1) - the catalytic core - and F(0) - the membrane proton channel. F(1) has five subunits: alpha(3), beta(3), gamma(1), delta(1), epsilon(1). F(0) has three main subunits: a(1), b(2) and c(10-14). The alpha and beta chains form an alternating ring which encloses part of the gamma chain. F(1) is attached to F(0) by a central stalk formed by the gamma and epsilon chains, while a peripheral stalk is formed by the delta and b chains.

It is found in the cell membrane. Its function is as follows. F(1)F(0) ATP synthase produces ATP from ADP in the presence of a proton or sodium gradient. F-type ATPases consist of two structural domains, F(1) containing the extramembraneous catalytic core and F(0) containing the membrane proton channel, linked together by a central stalk and a peripheral stalk. During catalysis, ATP synthesis in the catalytic domain of F(1) is coupled via a rotary mechanism of the central stalk subunits to proton translocation. In terms of biological role, component of the F(0) channel, it forms part of the peripheral stalk, linking F(1) to F(0). The sequence is that of ATP synthase subunit b from Lactobacillus johnsonii (strain CNCM I-12250 / La1 / NCC 533).